The primary structure comprises 478 residues: ATP-dependent RNA helicase DDX19A (478 aa).

The residue at position 2 (Ala-2) is an N-acetylalanine. The interval Ala-2–Glu-299 is N-terminal lobe. Lys-26 is covalently cross-linked (Glycyl lysine isopeptide (Lys-Gly) (interchain with G-Cter in SUMO1); alternate). A Glycyl lysine isopeptide (Lys-Gly) (interchain with G-Cter in SUMO2); alternate cross-link involves residue Lys-26. The interval Thr-34–Glu-53 is disordered. At Thr-42 the chain carries Phosphothreonine. The tract at residues Asp-54–Ser-67 is N-terminal helix. Positions Lys-91 to Glu-119 match the Q motif motif. Residues Gln-118 and Ser-137 to Thr-144 contribute to the ATP site. In terms of domain architecture, Helicase ATP-binding spans Met-124–Ile-294. Positions Asp-241–Asp-244 match the DEAD box motif. Positions Glu-300 to Asn-478 are C-terminal lobe. Residues Thr-305–Ile-473 form the Helicase C-terminal domain. Residues Arg-428 and Arg-431 each coordinate ATP.

The protein belongs to the DEAD box helicase family. DDX19/DBP5 subfamily. In terms of tissue distribution, found in testis, heart, brain, liver, skeletal muscle, and kidney.

Its subcellular location is the cytoplasm. The protein localises to the nucleus. It is found in the nucleoplasm. The catalysed reaction is ATP + H2O = ADP + phosphate + H(+). In terms of biological role, ATP-dependent RNA helicase involved in mRNA export from the nucleus. Rather than unwinding RNA duplexes, DDX19 functions as a remodeler of ribonucleoprotein particles, whereby proteins bound to nuclear mRNA are dissociated and replaced by cytoplasmic mRNA binding proteins. This is ATP-dependent RNA helicase DDX19A (Ddx19a) from Mus musculus (Mouse).